The primary structure comprises 406 residues: MPSLYGLERSGDVEKLVELLQESEKETVRRRAAEILGNLDEPEPEGIQALVDAMSDDDESVRAAAIDALTQQEAVDALMRGLDQEVPDSGATWAQAEAFVENLESETPELRMAAANVLGLLGVEDTARPLAKQLQTEEHVGVRARVARALGRIEQPAVTGILVDCLHGEPLKVRREAAESLGRLTTEQALDGLLSVVEDDSEAMRRTAVSSLGRFETAEPVDALVERLGDESDLVRRAAVFSLIEILSNVPPDQSHELRETIVDRMSARSDPSIIKSLIEIIDEGTQLHQRRNATWMLGRVAGDQRTKMDAIEALRELLGEDDDLIAQFAATGLAEIGGASVETSLLEVVETQEYGEDAVAMAAFALGKVGGDRSRQRLERLVDETDSEEVRRRAFSAISKLGGKT.

7 HEAT repeats span residues 7 to 41 (LERS…NLDE), 42 to 78 (PEPE…VDAL), 90 to 127 (GATW…EDTA), 153 to 184 (IEQP…LGRL), 185 to 215 (TTEQ…LGRF), 216 to 252 (ETAE…NVPP), and 370 to 406 (VGGD…GGKT).

In terms of assembly, interacts with chemotaxis (Che) proteins.

Involved in taxis signal transduction. Essential for the ability to control the direction of flagellar rotation. May have a role between CheY and the flagellum. The chain is HEAT repeat-containing taxis protein OE_2401F from Halobacterium salinarum (strain ATCC 29341 / DSM 671 / R1).